A 345-amino-acid chain; its full sequence is S-adenosylmethionine:tRNA ribosyltransferase-isomerase (345 aa).

Belongs to the QueA family. Monomer.

Its subcellular location is the cytoplasm. It carries out the reaction 7-aminomethyl-7-carbaguanosine(34) in tRNA + S-adenosyl-L-methionine = epoxyqueuosine(34) in tRNA + adenine + L-methionine + 2 H(+). Its pathway is tRNA modification; tRNA-queuosine biosynthesis. Transfers and isomerizes the ribose moiety from AdoMet to the 7-aminomethyl group of 7-deazaguanine (preQ1-tRNA) to give epoxyqueuosine (oQ-tRNA). This Helicobacter pylori (strain Shi470) protein is S-adenosylmethionine:tRNA ribosyltransferase-isomerase.